We begin with the raw amino-acid sequence, 284 residues long: MTDRRRINGPAGATIPPVYEDSGISEVKALKIRSRPSNIIRKIYLKTGVTPSASGSAYLELETSANSGVSGLKLSCTVHGPRSLPRSSPFSPHMVVSTHVKYAPFATKQRRGYLRDPTERDLGIHLEAALRGAIIADRWPKSGVDIIISIIEGDQDREASKTQGDEVWDMMNTLSGCITVASAALADAGIDCVDTVAGGVAALVQDSDGSPEIVVDPIPSEHRKILAACCVAYLPMRDEVTNLWFRGDLPASDMDLYTELVEKGIQASRSANRVLVDCLTETVG.

This sequence belongs to the RNase PH family. Component of the RNA exosome complex.

It localises to the cytoplasm. It is found in the nucleus. The protein resides in the nucleolus. Its function is as follows. Non-catalytic component of the RNA exosome complex which has 3'-&gt;5' exoribonuclease activity and participates in a multitude of cellular RNA processing and degradation events. The sequence is that of Exosome complex component MTR3 (MTR3) from Chaetomium thermophilum (strain DSM 1495 / CBS 144.50 / IMI 039719) (Thermochaetoides thermophila).